We begin with the raw amino-acid sequence, 968 residues long: MPFTLGQRWISDTESELGLGTVVAVDARTVTLLFPSTGENRLYARSDSPVTRVMFNPGDTITSHDGWQMQVEEVKEENGLLTYIGTRLDTEESGVALREVFLDSKLVFSKPQDRLFAGQIDRMDRFALRYRARKYSSEQFRMPYSGLRGQRTSLIPHQLNIAHDVGRRHAPRVLLADEVGLGKTIEAGMILHQQLLSGAAERVLIIVPETLQHQWLVEMLRRFNLRFALFDDERYAEAQHDAYNPFDTEQLVICSLDFARRSKQRLEHLCEAEWDLLVVDEAHHLVWSEDAPSREYQAIEQLAEHVPGVLLLTATPEQLGMESHFARLRLLDPNRFHDFAQFVEEQKNYRPVADAVAMLLAGNKLSNDELNMLGEMIGEQDIEPLLQAANSDSEDAQSARQELVSMLMDRHGTSRVLFRNTRNGVKGFPKRELHTIKLPLPTQYQTAIKVSGIMGARKSAEDRARDMLYPERIYQEFEGDNATWWNFDPRVEWLMGYLTSHRSQKVLVICAKAATALQLEQVLREREGIRAAVFHEGMSIIERDRAAAWFAEEDTGAQVLLCSEIGSEGRNFQFASHMVMFDLPFNPDLLEQRIGRLDRIGQAHDIQIHVPYLEKTAQSVLVRWYHEGLDAFEHTCPTGRTIYDSVYNDLINYLASPDQTEGFDDLIKNCREQHEALKAQLEQGRDRLLEIHSNGGEKAQALAESIEEQDDDTNLIAFAMNLLDIIGINQDDRGDNMIVLTPSDHMLVPDFPGLSEDGITITFDREVALAREDAQFITWEHPLIRNGLDLILSGDTGSSTISLLKNKALPVGTLLVELIYVVEAQAPKQLQLNRFLPPTPVRMLLDKNGNNLAAQVEFETFNRQLNAVNRHTGSKLVNAVQQDVHAILQLGEAQIEKSARALIDAARNEADEKLSAELSRLEALRAVNPNIRDDELTAIESNRQQVMESLDQAGWRLDALRLIVVTHQ.

One can recognise a Helicase ATP-binding domain in the interval 164 to 334; the sequence is DVGRRHAPRV…FARLRLLDPN (171 aa). 177–184 contributes to the ATP binding site; that stretch reads DEVGLGKT. Residues 280–283 carry the DEAH box motif; that stretch reads DEAH. The 173-residue stretch at 490–662 folds into the Helicase C-terminal domain; it reads RVEWLMGYLT…YLASPDQTEG (173 aa).

The protein belongs to the SNF2/RAD54 helicase family. RapA subfamily. Interacts with the RNAP. Has a higher affinity for the core RNAP than for the holoenzyme. Its ATPase activity is stimulated by binding to RNAP.

Transcription regulator that activates transcription by stimulating RNA polymerase (RNAP) recycling in case of stress conditions such as supercoiled DNA or high salt concentrations. Probably acts by releasing the RNAP, when it is trapped or immobilized on tightly supercoiled DNA. Does not activate transcription on linear DNA. Probably not involved in DNA repair. In Shigella boydii serotype 18 (strain CDC 3083-94 / BS512), this protein is RNA polymerase-associated protein RapA.